The following is a 246-amino-acid chain: Small ribosomal subunit protein uS2 (246 aa).

The interval 225–246 (SKSSASVPNKDEYVAAEDGAAE) is disordered.

This sequence belongs to the universal ribosomal protein uS2 family.

This Cellvibrio japonicus (strain Ueda107) (Pseudomonas fluorescens subsp. cellulosa) protein is Small ribosomal subunit protein uS2.